Here is a 138-residue protein sequence, read N- to C-terminus: uncharacterized protein (138 aa).

This is an uncharacterized protein from Acanthamoeba polyphaga (Amoeba).